A 156-amino-acid chain; its full sequence is ATP synthase subunit b (156 aa).

Residues 5–27 (ITLIGQMITFAIFIGFTMKFVWP) form a helical membrane-spanning segment.

This sequence belongs to the ATPase B chain family. As to quaternary structure, F-type ATPases have 2 components, F(1) - the catalytic core - and F(0) - the membrane proton channel. F(1) has five subunits: alpha(3), beta(3), gamma(1), delta(1), epsilon(1). F(0) has three main subunits: a(1), b(2) and c(10-14). The alpha and beta chains form an alternating ring which encloses part of the gamma chain. F(1) is attached to F(0) by a central stalk formed by the gamma and epsilon chains, while a peripheral stalk is formed by the delta and b chains.

Its subcellular location is the cell inner membrane. Its function is as follows. F(1)F(0) ATP synthase produces ATP from ADP in the presence of a proton or sodium gradient. F-type ATPases consist of two structural domains, F(1) containing the extramembraneous catalytic core and F(0) containing the membrane proton channel, linked together by a central stalk and a peripheral stalk. During catalysis, ATP synthesis in the catalytic domain of F(1) is coupled via a rotary mechanism of the central stalk subunits to proton translocation. Component of the F(0) channel, it forms part of the peripheral stalk, linking F(1) to F(0). This chain is ATP synthase subunit b, found in Francisella tularensis subsp. holarctica (strain OSU18).